A 433-amino-acid polypeptide reads, in one-letter code: Trigger factor (433 aa).

Positions 163–248 (GDTVNIDFSG…VNEIKFKEVP (86 aa)) constitute a PPIase FKBP-type domain.

This sequence belongs to the FKBP-type PPIase family. Tig subfamily.

The protein resides in the cytoplasm. It carries out the reaction [protein]-peptidylproline (omega=180) = [protein]-peptidylproline (omega=0). Its function is as follows. Involved in protein export. Acts as a chaperone by maintaining the newly synthesized protein in an open conformation. Functions as a peptidyl-prolyl cis-trans isomerase. This Staphylococcus aureus (strain bovine RF122 / ET3-1) protein is Trigger factor.